Here is a 289-residue protein sequence, read N- to C-terminus: Rhodopsin (289 aa).

The Extracellular portion of the chain corresponds to 1 to 7 (YLVSPAA). A helical transmembrane segment spans residues 8-32 (YAALGAYMFLLILVGFPVNFLTLYV). Residues 33–44 (TLDHKKLRTPLN) lie on the Cytoplasmic side of the membrane. A helical membrane pass occupies residues 45-67 (YILLNLAVADLFMVLGGFTTTMY). Over 68–81 (TSMHGYFVLGRLGC) the chain is Extracellular. A disulfide bridge links Cys81 with Cys158. Residues 82-104 (NLEGFFATLGGEIALWSLVVLAI) form a helical membrane-spanning segment. The 'Ionic lock' involved in activated form stabilization signature appears at 105-107 (ERW). Topologically, residues 105–123 (ERWIVVCKPISNFRFTEDH) are cytoplasmic. The chain crosses the membrane as a helical span at residues 124-144 (AIMGLAFSWVMALTCAVPPLV). Residues 145-173 (GWSRYIPEGMQCSCGVDYYTRAEGFNTES) lie on the Extracellular side of the membrane. The helical transmembrane segment at 174–195 (FVLYMFTVHFLIPLSVIFFCYG) threads the bilayer. Residues 196 to 223 (RLLCAVKEAAAAQQESETTQRAEKEVSR) lie on the Cytoplasmic side of the membrane. Residues 224 to 245 (MVVLMVIGFLVCWLPYASVAWW) form a helical membrane-spanning segment. The Extracellular portion of the chain corresponds to 246-257 (IFCNQGSEFGPI). The helical transmembrane segment at 258–279 (FMTLPAFFAKTSAIYNPLIYIC) threads the bilayer. Lys267 carries the N6-(retinylidene)lysine modification. Topologically, residues 280-289 (MNKQFRHCMI) are cytoplasmic.

It belongs to the G-protein coupled receptor 1 family. Opsin subfamily. Phosphorylated on some or all of the serine and threonine residues present in the C-terminal region. In terms of processing, contains one covalently linked retinal chromophore.

Its subcellular location is the membrane. The protein localises to the cell projection. It localises to the cilium. The protein resides in the photoreceptor outer segment. Functionally, photoreceptor required for image-forming vision at low light intensity. While most salt water fish species use retinal as chromophore, most freshwater fish use 3-dehydroretinal, or a mixture of retinal and 3-dehydroretinal. Light-induced isomerization of 11-cis to all-trans retinal triggers a conformational change that activates signaling via G-proteins. Subsequent receptor phosphorylation mediates displacement of the bound G-protein alpha subunit by arrestin and terminates signaling. This is Rhodopsin (rho) from Procottus jeittelesii (Red sculpin).